A 241-amino-acid chain; its full sequence is Small ribosomal subunit protein uS2 (241 aa).

Belongs to the universal ribosomal protein uS2 family.

The chain is Small ribosomal subunit protein uS2 from Yersinia enterocolitica serotype O:8 / biotype 1B (strain NCTC 13174 / 8081).